Here is a 505-residue protein sequence, read N- to C-terminus: ATP synthase subunit alpha (505 aa).

171-178 (GDRQTGKT) contributes to the ATP binding site.

The protein belongs to the ATPase alpha/beta chains family. In terms of assembly, F-type ATPases have 2 components, CF(1) - the catalytic core - and CF(0) - the membrane proton channel. CF(1) has five subunits: alpha(3), beta(3), gamma(1), delta(1), epsilon(1). CF(0) has three main subunits: a(1), b(2) and c(9-12). The alpha and beta chains form an alternating ring which encloses part of the gamma chain. CF(1) is attached to CF(0) by a central stalk formed by the gamma and epsilon chains, while a peripheral stalk is formed by the delta and b chains.

The protein localises to the cell inner membrane. It catalyses the reaction ATP + H2O + 4 H(+)(in) = ADP + phosphate + 5 H(+)(out). Functionally, produces ATP from ADP in the presence of a proton gradient across the membrane. The alpha chain is a regulatory subunit. The polypeptide is ATP synthase subunit alpha (Aliarcobacter butzleri (strain RM4018) (Arcobacter butzleri)).